The following is a 1366-amino-acid chain: Collagen alpha-2(I) chain (1366 aa).

Positions 1 to 22 are cleaved as a signal peptide; it reads MLSFVDTRTLLLLAVTLCLATC. Position 23 is a pyrrolidone carboxylic acid (glutamine 23). A propeptide spans 23-79 (N-terminal propeptide); it reads QSLQEETVRKGPAGDRGPRGERGPPGPPGRDGEDGPTGPPGPPGPPGPPGLGGNFAA. Over residues 28–44 the composition is skewed to basic and acidic residues; sequence ETVRKGPAGDRGPRGER. The interval 28-1130 is disordered; it reads ETVRKGPAGD…QPRSAPSLRP (1103 aa). Residues proline 47, proline 50, proline 62, proline 65, proline 68, and proline 71 each carry the 4-hydroxyproline modification. The segment covering 59 to 71 has biased composition (pro residues); sequence TGPPGPPGPPGPP. Residue glutamine 80 is modified to Pyrrolidone carboxylic acid. The residue at position 84 (lysine 84) is an Allysine. A compositionally biased stretch (gly residues) spans 84–94; that stretch reads KGVGLGPGPMG. Residues 95 to 140 show a composition bias toward low complexity; sequence LMGPRGPPGAAGAPGPQGFQGPAGEPGEPGQTGPAGARGPAGPPGK. 2 positions are modified to 4-hydroxyproline: proline 102 and proline 108. Basic and acidic residues predominate over residues 141–155; sequence AGEDGHPGKPGRPGE. Position 177 is a 5-hydroxylysine; alternate (lysine 177). An O-linked (Gal...) hydroxylysine; alternate glycan is attached at lysine 177. 6 stretches are compositionally biased toward low complexity: residues 225–254, 269–293, 300–321, 330–345, 398–410, and 419–434; these read VGAP…SAGP, AVGN…LSGP, PGAN…AGAP, PGPV…RGLV, LRGS…LPGA, and PPGS…VRGP. A 4-hydroxyproline mark is found at proline 420, proline 441, and proline 444. 2 stretches are compositionally biased toward low complexity: residues 470–489 and 513–531; these read LPGI…RGEP and AGLA…NGAQ. A compositionally biased stretch (gly residues) spans 538–547; the sequence is GVQGGKGEQG. 4 stretches are compositionally biased toward low complexity: residues 594–611, 623–648, 663–710, and 717–737; these read PGES…SRGP, EPGV…RGAA, RGEI…PRGS, and VGPA…QPGA. The span at 738–747 shows a compositional bias: basic and acidic residues; it reads KGERGAKGPK. The span at 752–765 shows a compositional bias: low complexity; it reads VVGPTGPVGAAGPA. Positions 775 to 784 are enriched in gly residues; the sequence is GSRGDGGPPG. Composition is skewed to low complexity over residues 786 to 795, 849 to 876, 884 to 932, 956 to 974, and 983 to 1001; these read TGFPGAAGRT, SGEA…LGLP, LPGV…NPGN, PVGA…PAGK, and PSGP…PSGP. Residues 1005–1016 are compositionally biased toward basic and acidic residues; the sequence is RGDKGEPGEKGP. Pro residues predominate over residues 1089–1101; that stretch reads AGPPGPPGPPGPP. The propeptide at 1120–1366 is C-terminal propeptide; that stretch reads DQPRSAPSLR…FVDIGPVCFK (247 aa). The Fibrillar collagen NC1 domain maps to 1133–1366; that stretch reads YEVDATLKSL…FVDIGPVCFK (234 aa). 3 disulfides stabilise this stretch: cysteine 1163–cysteine 1195, cysteine 1203–cysteine 1364, and cysteine 1272–cysteine 1317. The Ca(2+) site is built by aspartate 1181, asparagine 1183, glutamine 1184, cysteine 1186, and aspartate 1189. Asparagine 1267 is a glycosylation site (N-linked (GlcNAc...) asparagine).

This sequence belongs to the fibrillar collagen family. In terms of assembly, trimers of one alpha 2(I) and two alpha 1(I) chains. Interacts (via C-terminus) with TMEM131 (via PapD-L domain); the interaction is direct and is involved in assembly and TRAPPIII ER-to-Golgi transport complex-dependent secretion of collagen. Prolines at the third position of the tripeptide repeating unit (G-X-Y) are hydroxylated in some or all of the chains. Forms the fibrils of tendon, ligaments and bones. In bones the fibrils are mineralized with calcium hydroxyapatite.

It localises to the secreted. Its subcellular location is the extracellular space. The protein localises to the extracellular matrix. Functionally, type I collagen is a member of group I collagen (fibrillar forming collagen). This chain is Collagen alpha-2(I) chain (COL1A2), found in Homo sapiens (Human).